The following is a 347-amino-acid chain: Quinolinate synthase (347 aa).

The iminosuccinate site is built by H47 and S68. C113 is a [4Fe-4S] cluster binding site. Iminosuccinate-binding positions include 139–141 and S156; that span reads YAN. Residue C200 participates in [4Fe-4S] cluster binding. Iminosuccinate-binding positions include 226 to 228 and T243; that span reads HPE. Residue C297 participates in [4Fe-4S] cluster binding.

Belongs to the quinolinate synthase family. Type 1 subfamily. Requires [4Fe-4S] cluster as cofactor.

It localises to the cytoplasm. The enzyme catalyses iminosuccinate + dihydroxyacetone phosphate = quinolinate + phosphate + 2 H2O + H(+). It functions in the pathway cofactor biosynthesis; NAD(+) biosynthesis; quinolinate from iminoaspartate: step 1/1. Functionally, catalyzes the condensation of iminoaspartate with dihydroxyacetone phosphate to form quinolinate. This Escherichia coli O45:K1 (strain S88 / ExPEC) protein is Quinolinate synthase.